The chain runs to 455 residues: Nucleoside-triphosphatase (455 aa).

Glu-168 acts as the Proton acceptor in catalysis.

It belongs to the GDA1/CD39 NTPase family.

It is found in the nucleus. The enzyme catalyses a ribonucleoside 5'-triphosphate + H2O = a ribonucleoside 5'-diphosphate + phosphate + H(+). Functionally, might be involved in RNA transport out of nuclei. In Pisum sativum (Garden pea), this protein is Nucleoside-triphosphatase.